The sequence spans 79 residues: D-alanyl carrier protein (79 aa).

The Carrier domain maps to M1–Q77. S35 is modified (O-(pantetheine 4'-phosphoryl)serine).

The protein belongs to the DltC family. In terms of processing, 4'-phosphopantetheine is transferred from CoA to a specific serine of apo-DCP.

It localises to the cytoplasm. The protein operates within cell wall biogenesis; lipoteichoic acid biosynthesis. Its function is as follows. Carrier protein involved in the D-alanylation of lipoteichoic acid (LTA). The loading of thioester-linked D-alanine onto DltC is catalyzed by D-alanine--D-alanyl carrier protein ligase DltA. The DltC-carried D-alanyl group is further transferred to cell membrane phosphatidylglycerol (PG) by forming an ester bond, probably catalyzed by DltD. D-alanylation of LTA plays an important role in modulating the properties of the cell wall in Gram-positive bacteria, influencing the net charge of the cell wall. The protein is D-alanyl carrier protein of Streptococcus pneumoniae serotype 2 (strain D39 / NCTC 7466).